Here is a 171-residue protein sequence, read N- to C-terminus: 3-hydroxydecanoyl-[acyl-carrier-protein] dehydratase (171 aa).

The active site involves His71.

The protein belongs to the thioester dehydratase family. FabA subfamily. As to quaternary structure, homodimer.

It localises to the cytoplasm. It catalyses the reaction a (3R)-hydroxyacyl-[ACP] = a (2E)-enoyl-[ACP] + H2O. The enzyme catalyses (3R)-hydroxydecanoyl-[ACP] = (2E)-decenoyl-[ACP] + H2O. The catalysed reaction is (2E)-decenoyl-[ACP] = (3Z)-decenoyl-[ACP]. Its pathway is lipid metabolism; fatty acid biosynthesis. Necessary for the introduction of cis unsaturation into fatty acids. Catalyzes the dehydration of (3R)-3-hydroxydecanoyl-ACP to E-(2)-decenoyl-ACP and then its isomerization to Z-(3)-decenoyl-ACP. Can catalyze the dehydratase reaction for beta-hydroxyacyl-ACPs with saturated chain lengths up to 16:0, being most active on intermediate chain length. The chain is 3-hydroxydecanoyl-[acyl-carrier-protein] dehydratase from Agrobacterium fabrum (strain C58 / ATCC 33970) (Agrobacterium tumefaciens (strain C58)).